The chain runs to 101 residues: Small ribosomal subunit protein bS18c (101 aa).

Belongs to the bacterial ribosomal protein bS18 family. Part of the 30S ribosomal subunit.

The protein localises to the plastid. It is found in the chloroplast. In Aethionema grandiflorum (Persian stone-cress), this protein is Small ribosomal subunit protein bS18c.